Consider the following 267-residue polypeptide: Flap endonuclease Xni (267 aa).

Asp-115 contacts Mg(2+). The 91-residue stretch at 171-261 (VAPAQLVDFW…LGFNLREIRY (91 aa)) folds into the 5'-3' exonuclease domain. The K(+) site is built by Leu-182, Val-193, and Ile-196. Residues 195–200 (GIGPKT) form an interaction with DNA region.

The protein belongs to the Xni family. It depends on Mg(2+) as a cofactor. K(+) is required as a cofactor.

In terms of biological role, has flap endonuclease activity. During DNA replication, flap endonucleases cleave the 5'-overhanging flap structure that is generated by displacement synthesis when DNA polymerase encounters the 5'-end of a downstream Okazaki fragment. The polypeptide is Flap endonuclease Xni (Aeromonas hydrophila subsp. hydrophila (strain ATCC 7966 / DSM 30187 / BCRC 13018 / CCUG 14551 / JCM 1027 / KCTC 2358 / NCIMB 9240 / NCTC 8049)).